Here is a 483-residue protein sequence, read N- to C-terminus: GTPase Der (483 aa).

2 EngA-type G domains span residues 3–167 (FTLA…GEER) and 212–387 (LRIA…EIWN). GTP is bound by residues 9 to 16 (GRPNVGKS), 56 to 60 (DTAGL), 119 to 122 (NKAE), 218 to 225 (GRPNAGKS), 265 to 269 (DTAGM), and 330 to 333 (NKWD). The 85-residue stretch at 388–472 (RRISTGRLNR…PIRLSLRTSD (85 aa)) folds into the KH-like domain.

This sequence belongs to the TRAFAC class TrmE-Era-EngA-EngB-Septin-like GTPase superfamily. EngA (Der) GTPase family. In terms of assembly, associates with the 50S ribosomal subunit.

Functionally, GTPase that plays an essential role in the late steps of ribosome biogenesis. The protein is GTPase Der of Brucella melitensis biotype 2 (strain ATCC 23457).